The chain runs to 317 residues: Porphobilinogen deaminase (317 aa).

Cys245 carries the post-translational modification S-(dipyrrolylmethanemethyl)cysteine.

The protein belongs to the HMBS family. As to quaternary structure, monomer. Dipyrromethane is required as a cofactor.

It catalyses the reaction 4 porphobilinogen + H2O = hydroxymethylbilane + 4 NH4(+). It participates in porphyrin-containing compound metabolism; protoporphyrin-IX biosynthesis; coproporphyrinogen-III from 5-aminolevulinate: step 2/4. The protein operates within porphyrin-containing compound metabolism; chlorophyll biosynthesis. Its function is as follows. Tetrapolymerization of the monopyrrole PBG into the hydroxymethylbilane pre-uroporphyrinogen in several discrete steps. The polypeptide is Porphobilinogen deaminase (Synechococcus sp. (strain CC9605)).